We begin with the raw amino-acid sequence, 86 residues long: Neurotoxin homolog NL1 (86 aa).

A signal peptide spans 1–21; the sequence is MKTLLLTLVVVTMVCMDLGYT. 4 disulfide bridges follow: Cys24–Cys45, Cys38–Cys62, Cys66–Cys78, and Cys79–Cys84.

This sequence belongs to the three-finger toxin family. Short-chain subfamily. Orphan group VIII (haditoxin) sub-subfamily. In terms of assembly, homodimer; non-covalently linked. As to expression, expressed by the venom gland.

The protein resides in the secreted. Antagonist of muscle and neuronal nicotinic acetylcholine receptors (nAChR) with highest affinity for neuronal alpha-7/CHRNA7 nAChRs. This Naja atra (Chinese cobra) protein is Neurotoxin homolog NL1.